The primary structure comprises 366 residues: Quinolinate synthase (366 aa).

2 residues coordinate iminosuccinate: His-44 and Ser-61. Cys-108 is a [4Fe-4S] cluster binding site. Residues 139-141 (YIN) and Ser-160 contribute to the iminosuccinate site. Cys-228 contributes to the [4Fe-4S] cluster binding site. Residues 254 to 256 (HPE) and Thr-271 each bind iminosuccinate. Cys-318 serves as a coordination point for [4Fe-4S] cluster.

This sequence belongs to the quinolinate synthase family. Type 3 subfamily. The cofactor is [4Fe-4S] cluster.

It is found in the cytoplasm. It catalyses the reaction iminosuccinate + dihydroxyacetone phosphate = quinolinate + phosphate + 2 H2O + H(+). The protein operates within cofactor biosynthesis; NAD(+) biosynthesis; quinolinate from iminoaspartate: step 1/1. Catalyzes the condensation of iminoaspartate with dihydroxyacetone phosphate to form quinolinate. This chain is Quinolinate synthase, found in Listeria innocua serovar 6a (strain ATCC BAA-680 / CLIP 11262).